The following is a 448-amino-acid chain: Proteases secretion protein PrtE (448 aa).

Residues 1 to 30 (MTGMDITTQDELNEAAMRDRASRDEERALR) are Cytoplasmic-facing. Residues 31–50 (LGWWLVLAGFGGFLLWALLA) form a helical membrane-spanning segment. The Periplasmic portion of the chain corresponds to 51-448 (PLDKGVAVQG…DRMHLALTEE (398 aa)).

This sequence belongs to the membrane fusion protein (MFP) (TC 8.A.1) family.

Its subcellular location is the cell inner membrane. Its function is as follows. Involved in the secretion of proteases A, B, C and G. The sequence is that of Proteases secretion protein PrtE (prtE) from Dickeya chrysanthemi (Pectobacterium chrysanthemi).